We begin with the raw amino-acid sequence, 632 residues long: tRNA uridine 5-carboxymethylaminomethyl modification enzyme MnmG (632 aa).

FAD contacts are provided by residues 13–18, Val125, and Ser180; that span reads GGGHAG. 273–287 is an NAD(+) binding site; it reads GPRYCPSIEDKVMRF. FAD is bound at residue Gln370.

The protein belongs to the MnmG family. In terms of assembly, homodimer. Heterotetramer of two MnmE and two MnmG subunits. It depends on FAD as a cofactor.

It is found in the cytoplasm. In terms of biological role, NAD-binding protein involved in the addition of a carboxymethylaminomethyl (cmnm) group at the wobble position (U34) of certain tRNAs, forming tRNA-cmnm(5)s(2)U34. In Proteus mirabilis (strain HI4320), this protein is tRNA uridine 5-carboxymethylaminomethyl modification enzyme MnmG.